Reading from the N-terminus, the 306-residue chain is Porphobilinogen deaminase (306 aa).

The residue at position 237 (Cys-237) is an S-(dipyrrolylmethanemethyl)cysteine.

The protein belongs to the HMBS family. As to quaternary structure, monomer. Dipyrromethane is required as a cofactor.

It catalyses the reaction 4 porphobilinogen + H2O = hydroxymethylbilane + 4 NH4(+). It participates in porphyrin-containing compound metabolism; protoporphyrin-IX biosynthesis; coproporphyrinogen-III from 5-aminolevulinate: step 2/4. Functionally, tetrapolymerization of the monopyrrole PBG into the hydroxymethylbilane pre-uroporphyrinogen in several discrete steps. This Syntrophus aciditrophicus (strain SB) protein is Porphobilinogen deaminase.